The following is a 560-amino-acid chain: NAD(P)H-quinone oxidoreductase chain 4-3 (560 aa).

Helical transmembrane passes span 5-25 (FPWL…IPLL), 35-55 (WYAL…FWHH), 86-106 (ISMP…LAAW), 114-134 (LFYF…VAQD), 135-155 (LLLF…LVSI), 168-188 (FLLY…AMAL), 208-228 (ALEL…LAIF), 242-262 (SAPV…YGLI), 273-293 (HIYF…YGGL), 310-330 (VSHM…GVSG), 331-351 (AMLQ…LAGV), 374-394 (VFAL…MSGF), 417-437 (VMVF…LSML), and 488-508 (VFIA…PKIA).

It belongs to the complex I subunit 4 family.

It is found in the cellular thylakoid membrane. It catalyses the reaction a plastoquinone + NADH + (n+1) H(+)(in) = a plastoquinol + NAD(+) + n H(+)(out). The enzyme catalyses a plastoquinone + NADPH + (n+1) H(+)(in) = a plastoquinol + NADP(+) + n H(+)(out). Functionally, NDH-1 shuttles electrons from NAD(P)H, via FMN and iron-sulfur (Fe-S) centers, to quinones in the respiratory chain. The immediate electron acceptor for the enzyme in this species is believed to be plastoquinone. Couples the redox reaction to proton translocation (for every two electrons transferred, four hydrogen ions are translocated across the cytoplasmic membrane), and thus conserves the redox energy in a proton gradient. In Nostoc sp. (strain PCC 7120 / SAG 25.82 / UTEX 2576), this protein is NAD(P)H-quinone oxidoreductase chain 4-3 (ndhD3).